A 286-amino-acid chain; its full sequence is tRNA (guanine-N(7)-)-methyltransferase (286 aa).

Residues Glu91, Glu116, Asn143, and Asp165 each coordinate S-adenosyl-L-methionine. Asp165 is an active-site residue. Residues Lys169, Asp201, and 262-265 (TNFE) each bind substrate.

The protein belongs to the class I-like SAM-binding methyltransferase superfamily. TrmB family.

It catalyses the reaction guanosine(46) in tRNA + S-adenosyl-L-methionine = N(7)-methylguanosine(46) in tRNA + S-adenosyl-L-homocysteine. Its pathway is tRNA modification; N(7)-methylguanine-tRNA biosynthesis. Functionally, catalyzes the formation of N(7)-methylguanine at position 46 (m7G46) in tRNA. The sequence is that of tRNA (guanine-N(7)-)-methyltransferase from Bifidobacterium longum subsp. infantis (strain ATCC 15697 / DSM 20088 / JCM 1222 / NCTC 11817 / S12).